A 65-amino-acid polypeptide reads, in one-letter code: MALPKNLIPMPRSRFLRVKCIDCGNEQIVFSHPATKVRCLVCGATLVEPTGGKGVIKAKILEVLE.

The Zn(2+) site is built by Cys-20, Cys-23, Cys-39, and Cys-42. The C4-type zinc finger occupies 20–42 (CIDCGNEQIVFSHPATKVRCLVC).

Belongs to the eukaryotic ribosomal protein eS27 family. Part of the 30S ribosomal subunit. It depends on Zn(2+) as a cofactor.

The polypeptide is Small ribosomal subunit protein eS27 (Thermococcus gammatolerans (strain DSM 15229 / JCM 11827 / EJ3)).